Reading from the N-terminus, the 298-residue chain is 4-hydroxy-tetrahydrodipicolinate synthase (298 aa).

T48 provides a ligand contact to pyruvate. Catalysis depends on Y137, which acts as the Proton donor/acceptor. Residue K166 is the Schiff-base intermediate with substrate of the active site. Residue I207 participates in pyruvate binding.

It belongs to the DapA family. As to quaternary structure, homotetramer; dimer of dimers.

The protein localises to the cytoplasm. The catalysed reaction is L-aspartate 4-semialdehyde + pyruvate = (2S,4S)-4-hydroxy-2,3,4,5-tetrahydrodipicolinate + H2O + H(+). The protein operates within amino-acid biosynthesis; L-lysine biosynthesis via DAP pathway; (S)-tetrahydrodipicolinate from L-aspartate: step 3/4. Its function is as follows. Catalyzes the condensation of (S)-aspartate-beta-semialdehyde [(S)-ASA] and pyruvate to 4-hydroxy-tetrahydrodipicolinate (HTPA). The chain is 4-hydroxy-tetrahydrodipicolinate synthase from Campylobacter hominis (strain ATCC BAA-381 / DSM 21671 / CCUG 45161 / LMG 19568 / NCTC 13146 / CH001A).